Here is a 1502-residue protein sequence, read N- to C-terminus: Gem-associated protein 5 (1502 aa).

The important for interaction with U1 snRNA stretch occupies residues 1–124; sequence MKPEPRTLPP…LHWSPTVKDL (124 aa). Positions 13–15 are interaction with U4 snRNA; it reads NWY. Residue Ser-48 is modified to Phosphoserine. 11 WD repeats span residues 62–104, 107–148, 150–189, 193–264, 280–321, 333–374, 377–417, 424–464, 468–509, 533–573, and 576–622; these read GHTE…VVTE, LHQH…QHLF, EPRT…EVIH, GHDD…GVMV, TVKE…RRKY, HSRI…CCWT, SLGG…NNYD, GVKS…PPQI, YHKK…VVLQ, RYKL…LLCT, and QHHK…ESNP. At Ser-624 the chain carries Phosphoserine. WD repeat units lie at residues 637-677 and 680-720; these read GHTA…PLFN and GHRG…HSRP. Disordered stretches follow at residues 740 to 797 and 819 to 838; these read KLKK…SPVV and SSKA…EALL. Residue Lys-754 forms a Glycyl lysine isopeptide (Lys-Gly) (interchain with G-Cter in SUMO2) linkage. Ser-757, Ser-770, and Ser-778 each carry phosphoserine. Residues 825–838 are compositionally biased toward basic and acidic residues; the sequence is LKKEPAKEKPEALL. Ser-845 is modified (phosphoserine). Disordered stretches follow at residues 1309–1338 and 1378–1427; these read VSDK…LSAE and HQKS…SLPE. The stretch at 1355 to 1382 forms a coiled coil; sequence ASLQTSQRTVAEVQETLAEMIRQHQKSQ. Over residues 1380-1391 the composition is skewed to polar residues; it reads KSQLCKATTNGP. Residues 1392-1407 show a composition bias toward basic and acidic residues; it reads SRDEPSRDEPSQEAER.

This sequence belongs to the WD repeat gemin-5 family. Part of the core SMN complex that contains SMN1, GEMIN2/SIP1, DDX20/GEMIN3, GEMIN4, GEMIN5, GEMIN6, GEMIN7, GEMIN8 and STRAP/UNRIP. Part of the SMN-Sm complex that contains SMN1, GEMIN2/SIP1, DDX20/GEMIN3, GEMIN4, GEMIN5, GEMIN6, GEMIN7, GEMIN8, STRAP/UNRIP and the Sm proteins SNRPB, SNRPD1, SNRPD2, SNRPD3, SNRPE, SNRPF and SNRPG. Interacts directly with SMN1, SNRPB, SNRPD1, SNRPD2, SNRPD3 and SNRPE. Identified in a SMN complex that contains GEMIN2/SIP1. Interacts with cytosolic DDX20/GEMIN3 and GEMIN4. Interacts with SNRNP70 and HNRNPU. Identified in a complex with 80S ribosomes; binds to the 60S large ribosomal subunit. Interacts with the ribosomal subunits RPL3 and RPL4.

It localises to the nucleus. It is found in the nucleoplasm. The protein localises to the gem. The protein resides in the cytoplasm. In terms of biological role, the SMN complex catalyzes the assembly of small nuclear ribonucleoproteins (snRNPs), the building blocks of the spliceosome, and thereby plays an important role in the splicing of cellular pre-mRNAs. Most spliceosomal snRNPs contain a common set of Sm proteins SNRPB, SNRPD1, SNRPD2, SNRPD3, SNRPE, SNRPF and SNRPG that assemble in a heptameric protein ring on the Sm site of the small nuclear RNA to form the core snRNP (Sm core). In the cytosol, the Sm proteins SNRPD1, SNRPD2, SNRPE, SNRPF and SNRPG are trapped in an inactive 6S pICln-Sm complex by the chaperone CLNS1A that controls the assembly of the core snRNP. To assemble core snRNPs, the SMN complex accepts the trapped 5Sm proteins from CLNS1A forming an intermediate. Binding of snRNA inside 5Sm ultimately triggers eviction of the SMN complex, thereby allowing binding of SNRPD3 and SNRPB to complete assembly of the core snRNP. Within the SMN complex, GEMIN5 recognizes and delivers the small nuclear RNAs (snRNAs) to the SMN complex. Binds to the 7-methylguanosine cap of RNA molecules. Binds to the 3'-UTR of SMN1 mRNA and regulates its translation; does not affect mRNA stability. May play a role in the regulation of protein synthesis via its interaction with ribosomes. The sequence is that of Gem-associated protein 5 (Gemin5) from Mus musculus (Mouse).